The primary structure comprises 117 residues: MTRAKSGKISKNRHKKILKLAKGYRGRANSCFRVAIEKVEKALQYAYRDRRNRKRDFRGLWIQRINAAVREHGLVYSQFMGALKKTEIDIDRKVLAELAVNNSDGFVSIVEKAKAHI.

The protein belongs to the bacterial ribosomal protein bL20 family.

Its function is as follows. Binds directly to 23S ribosomal RNA and is necessary for the in vitro assembly process of the 50S ribosomal subunit. It is not involved in the protein synthesizing functions of that subunit. This chain is Large ribosomal subunit protein bL20, found in Rickettsia africae (strain ESF-5).